Here is a 433-residue protein sequence, read N- to C-terminus: Serine hydroxymethyltransferase (433 aa).

(6S)-5,6,7,8-tetrahydrofolate-binding positions include Leu-132 and 136 to 138; that span reads GHL. N6-(pyridoxal phosphate)lysine is present on Lys-241.

Belongs to the SHMT family. In terms of assembly, homodimer. The cofactor is pyridoxal 5'-phosphate.

Its subcellular location is the cytoplasm. The enzyme catalyses (6R)-5,10-methylene-5,6,7,8-tetrahydrofolate + glycine + H2O = (6S)-5,6,7,8-tetrahydrofolate + L-serine. It functions in the pathway one-carbon metabolism; tetrahydrofolate interconversion. The protein operates within amino-acid biosynthesis; glycine biosynthesis; glycine from L-serine: step 1/1. In terms of biological role, catalyzes the reversible interconversion of serine and glycine with tetrahydrofolate (THF) serving as the one-carbon carrier. This reaction serves as the major source of one-carbon groups required for the biosynthesis of purines, thymidylate, methionine, and other important biomolecules. Also exhibits THF-independent aldolase activity toward beta-hydroxyamino acids, producing glycine and aldehydes, via a retro-aldol mechanism. The sequence is that of Serine hydroxymethyltransferase from Bradyrhizobium sp. (strain ORS 278).